A 151-amino-acid chain; its full sequence is Small ribosomal subunit protein uS15 (151 aa).

Positions 1-16 (MPHRSRDKKGRSRSVR) are enriched in basic residues. The interval 1 to 20 (MPHRSRDKKGRSRSVRPAHP) is disordered.

It belongs to the universal ribosomal protein uS15 family. As to quaternary structure, part of the 30S ribosomal subunit.

This chain is Small ribosomal subunit protein uS15, found in Pyrobaculum aerophilum (strain ATCC 51768 / DSM 7523 / JCM 9630 / CIP 104966 / NBRC 100827 / IM2).